Consider the following 128-residue polypeptide: Small ribosomal subunit protein bS6 (128 aa).

Belongs to the bacterial ribosomal protein bS6 family.

Its function is as follows. Binds together with bS18 to 16S ribosomal RNA. The sequence is that of Small ribosomal subunit protein bS6 from Thermotoga sp. (strain RQ2).